Reading from the N-terminus, the 1058-residue chain is MSSSPLSKKRRVSGPDPKPGSNCSSAQSVLSEVSSVPTNGMAKNGSEADIDESLYSRQLYVLGHEAMKMLQTSSVLVSGLRGLGVEIAKNIILGGVKAVTLHDQGTTQWADLSSQFYLREEDIGKNRAEVSQPRLAELNSYVPVTAYTGPLVEDFLSGFQVVVLTNSPLEEQLRVGEFCHSRGIKLVVADTRGLFGQLFCDFGEEMVLTDSNGEQPLSAMVSMVTKDNPGVVTCLDEARHGFETGDFVSFSEVQGMVQLNGCQPIEIKVLGPYTFSICDTSNFSDYIRGGIVSQVKVPKKISFKSLPASLAEPDFVMTDFAKYSRPAQLHIGFQALHQFCAQHNRPPRPRNEEDATELVTLAQAVNARSPPAVQQDNVDEDLIRKLAYVAAGDLAPINAFIGGLAAQEVMKACSGKFMPIMQWLYFDALECLPEDKEALTEDKCLPRQNRYDGQVAVFGSDLQEKLGKQKYFLVGAGAIGCELLKNFAMIGLGCGEGGEVVVTDMDTIEKSNLNRQFLFRPWDVTKLKSDTAAAAVRQMNPYIQVTSHQNRVGPDTERIYDDDFFQNLDGVANALDNVDARMYMDRRCVYYRKPLLESGTLGTKGNVQVVIPFLTESYSSSQDPPEKSIPICTLKNFPNAIEHTLQWARDEFEGLFKQPAENVNQYLTDSKFVERTLRLAGTQPLEVLEAVQRSLVLQRPQTWGDCVTWACHHWHTQYCNNIRQLLHNFPPDQLTSSGAPFWSGPKRCPHPLTFDVNNTLHLDYVMAAANLFAQTYGLTGSQDRAAVASLLQSVQVPEFTPKSGVKIHVSDQELQSANASVDDSRLEELKATLPSPDKLPGFKMYPIDFEKDDDSNFHMDFIVAASNLRAENYDISPADRHKSKLIAGKIIPAIATTTAAVVGLVCLELYKVVQGHQQLDSYKNGFLNLALPFFGFSEPLAAPRHQYYNQEWTLWDRFEVQGLQPNGEEMTLKQFLDYFKTEHKLEITMLSQGVSMLYSFFMPAAKLKERLDQPMTEIVSRVSKRKLGRHVRALVLELCCNDESGEDVEVPYVRYTIR.

The disordered stretch occupies residues 1–46 (MSSSPLSKKRRVSGPDPKPGSNCSSAQSVLSEVSSVPTNGMAKNGS). An N-acetylserine modification is found at Ser2. Ser4, Ser13, Ser21, Ser24, and Ser46 each carry phosphoserine. A compositionally biased stretch (low complexity) spans 24–36 (SSAQSVLSEVSSV). Tyr55 bears the Phosphotyrosine mark. A run of 2 repeats spans residues 63–199 (GHEA…GQLF) and 459–611 (GSDL…QVVI). The 2 approximate repeats stretch occupies residues 63 to 611 (GHEAMKMLQT…GTKGNVQVVI (549 aa)). Residues Ala478, Asp504, Arg515, Lys528, and 576–577 (DN) each bind ATP. N6-succinyllysine is present on Lys528. Catalysis depends on Cys632, which acts as the Glycyl thioester intermediate. The residue at position 671 (Lys671) is an N6-acetyllysine. Thr800 carries the post-translational modification Phosphothreonine. Ser810, Ser816, Ser820, and Ser835 each carry phosphoserine. Lys980 is modified (N6-acetyllysine).

The protein belongs to the ubiquitin-activating E1 family. Monomer. Interacts with GAN (via BTB domain). Post-translationally, ISGylated.

The protein resides in the cytoplasm. Its subcellular location is the mitochondrion. The protein localises to the nucleus. The enzyme catalyses ATP + ubiquitin + [E1 ubiquitin-activating enzyme]-L-cysteine = AMP + diphosphate + S-ubiquitinyl-[E1 ubiquitin-activating enzyme]-L-cysteine.. The protein operates within protein modification; protein ubiquitination. Functionally, catalyzes the first step in ubiquitin conjugation to mark cellular proteins for degradation through the ubiquitin-proteasome system. Activates ubiquitin by first adenylating its C-terminal glycine residue with ATP, and thereafter linking this residue to the side chain of a cysteine residue in E1, yielding a ubiquitin-E1 thioester and free AMP. Essential for the formation of radiation-induced foci, timely DNA repair and for response to replication stress. Promotes the recruitment of TP53BP1 and BRCA1 at DNA damage sites. The protein is Ubiquitin-like modifier-activating enzyme 1 of Rattus norvegicus (Rat).